The chain runs to 196 residues: 7-methyl-GTP pyrophosphatase (196 aa).

Aspartate 69 functions as the Proton acceptor in the catalytic mechanism.

Belongs to the Maf family. YceF subfamily. A divalent metal cation is required as a cofactor.

The protein localises to the cytoplasm. The catalysed reaction is N(7)-methyl-GTP + H2O = N(7)-methyl-GMP + diphosphate + H(+). In terms of biological role, nucleoside triphosphate pyrophosphatase that hydrolyzes 7-methyl-GTP (m(7)GTP). May have a dual role in cell division arrest and in preventing the incorporation of modified nucleotides into cellular nucleic acids. The chain is 7-methyl-GTP pyrophosphatase from Photorhabdus laumondii subsp. laumondii (strain DSM 15139 / CIP 105565 / TT01) (Photorhabdus luminescens subsp. laumondii).